A 499-amino-acid polypeptide reads, in one-letter code: tRNA-specific adenosine deaminase 1 (499 aa).

The region spanning 63–498 (SMGTGTKCIG…IRNPPDYHQF (436 aa)) is the A to I editase domain. A Zn(2+)-binding site is contributed by His-87. Catalysis depends on Glu-89, which acts as the Proton donor. Arg-93 and Arg-94 together coordinate 1D-myo-inositol hexakisphosphate. Residue Cys-142 coordinates Zn(2+). 2 disordered regions span residues 170–194 (PVQETENLEDSKDKRNCEDPASPVA) and 212–237 (HHGTQESGPVKPDVSSSDLTKEEPDA). Residues 178 to 187 (EDSKDKRNCE) show a composition bias toward basic and acidic residues. Ser-191 carries the post-translational modification Phosphoserine. Cys-294 contacts Zn(2+). 1D-myo-inositol hexakisphosphate-binding residues include Lys-297, Arg-300, Lys-430, and Lys-466.

Belongs to the ADAT1 family. 1D-myo-inositol hexakisphosphate is required as a cofactor.

The enzyme catalyses adenosine(37) in tRNA(Ala) + H2O + H(+) = inosine(37) in tRNA(Ala) + NH4(+). In terms of biological role, specifically deaminates adenosine-37 to inosine in tRNA-Ala. In Mus musculus (Mouse), this protein is tRNA-specific adenosine deaminase 1 (Adat1).